A 459-amino-acid polypeptide reads, in one-letter code: Exodeoxyribonuclease 7 large subunit (459 aa).

Belongs to the XseA family. As to quaternary structure, heterooligomer composed of large and small subunits.

It localises to the cytoplasm. It carries out the reaction Exonucleolytic cleavage in either 5'- to 3'- or 3'- to 5'-direction to yield nucleoside 5'-phosphates.. In terms of biological role, bidirectionally degrades single-stranded DNA into large acid-insoluble oligonucleotides, which are then degraded further into small acid-soluble oligonucleotides. This is Exodeoxyribonuclease 7 large subunit from Pseudomonas aeruginosa (strain LESB58).